We begin with the raw amino-acid sequence, 105 residues long: Thioredoxin (105 aa).

In terms of domain architecture, Thioredoxin spans 2-105 (VKQIESKYAF…KLEATINELI (104 aa)). Lysine 3 is modified (N6-acetyllysine). Lysine 8 carries the post-translational modification N6-succinyllysine. Residues cysteine 32 and cysteine 35 each act as nucleophile in the active site. Cysteine 32 and cysteine 35 are oxidised to a cystine. Lysine 39 is subject to N6-acetyllysine. Cysteine 62 and cysteine 69 each carry S-nitrosocysteine. Residue cysteine 73 is modified to S-nitrosocysteine; alternate. Position 94 is an N6-acetyllysine; alternate (lysine 94). Lysine 94 carries the post-translational modification N6-succinyllysine; alternate.

The protein belongs to the thioredoxin family. In terms of assembly, homodimer; disulfide-linked. Interacts with TXNIP through the redox-active site. Interacts with MAP3K5 and CASP3. Interacts with APEX1; the interaction stimulates the FOS/JUN AP-1 DNA-binding activity in a redox-dependent manner. Post-translationally, in the fully reduced protein, both Cys-69 and Cys-73 are nitrosylated in response to nitric oxide (NO). When two disulfide bonds are present in the protein, only Cys-73 is nitrosylated. Cys-73 can serve as donor for nitrosylation of target proteins. As to expression, erythrocytes.

The protein localises to the nucleus. It localises to the cytoplasm. The protein resides in the secreted. Functionally, participates in various redox reactions through the reversible oxidation of its active center dithiol to a disulfide and catalyzes dithiol-disulfide exchange reactions. Plays a role in the reversible S-nitrosylation of cysteine residues in target proteins, and thereby contributes to the response to intracellular nitric oxide. Nitrosylates the active site Cys of CASP3 in response to nitric oxide (NO), and thereby inhibits caspase-3 activity. Induces the FOS/JUN AP-1 DNA binding activity in ionizing radiation (IR) cells through its oxidation/reduction status and stimulates AP-1 transcriptional activity. The polypeptide is Thioredoxin (TXN) (Sus scrofa (Pig)).